The chain runs to 217 residues: Protein TNT (217 aa).

The disordered stretch occupies residues 1–217; that stretch reads MSLVPGQHCS…HSTKQTGGKE (217 aa). Composition is skewed to polar residues over residues 20–36 and 45–61; these read SPIT…TEFS and TSPQ…SQGP. Composition is skewed to low complexity over residues 91–104 and 128–139; these read EPSL…LQSP and QSSESHVSSVQH. 2 stretches are compositionally biased toward polar residues: residues 177-191 and 207-217; these read RLNT…SQLG and AHSTKQTGGKE.

In terms of tissue distribution, preferentially expressed in teratocarcinoma rather than in normal testis.

The chain is Protein TNT (C16orf82) from Homo sapiens (Human).